We begin with the raw amino-acid sequence, 150 residues long: UPF0178 protein PC1_0756 (150 aa).

The protein belongs to the UPF0178 family.

This Pectobacterium carotovorum subsp. carotovorum (strain PC1) protein is UPF0178 protein PC1_0756.